Consider the following 212-residue polypeptide: Large ribosomal subunit protein uL1 (212 aa).

Belongs to the universal ribosomal protein uL1 family. In terms of assembly, part of the 50S ribosomal subunit.

Its function is as follows. Binds directly to 23S rRNA. Probably involved in E site tRNA release. Protein L1 is also a translational repressor protein, it controls the translation of its operon by binding to its mRNA. The polypeptide is Large ribosomal subunit protein uL1 (Methanothermobacter thermautotrophicus (strain ATCC 29096 / DSM 1053 / JCM 10044 / NBRC 100330 / Delta H) (Methanobacterium thermoautotrophicum)).